The primary structure comprises 392 residues: Phosphopentomutase (392 aa).

Residues Asp13, Asp286, His291, Asp327, His328, and His339 each contribute to the Mn(2+) site.

It belongs to the phosphopentomutase family. Requires Mn(2+) as cofactor.

Its subcellular location is the cytoplasm. It catalyses the reaction 2-deoxy-alpha-D-ribose 1-phosphate = 2-deoxy-D-ribose 5-phosphate. It carries out the reaction alpha-D-ribose 1-phosphate = D-ribose 5-phosphate. It participates in carbohydrate degradation; 2-deoxy-D-ribose 1-phosphate degradation; D-glyceraldehyde 3-phosphate and acetaldehyde from 2-deoxy-alpha-D-ribose 1-phosphate: step 1/2. Functionally, isomerase that catalyzes the conversion of deoxy-ribose 1-phosphate (dRib-1-P) and ribose 1-phosphate (Rib-1-P) to deoxy-ribose 5-phosphate (dRib-5-P) and ribose 5-phosphate (Rib-5-P), respectively. The chain is Phosphopentomutase from Oceanobacillus iheyensis (strain DSM 14371 / CIP 107618 / JCM 11309 / KCTC 3954 / HTE831).